Reading from the N-terminus, the 354-residue chain is Protein CbrA (354 aa).

The protein belongs to the CbrA family.

In Escherichia coli (strain K12), this protein is Protein CbrA (cbrA).